Consider the following 1002-residue polypeptide: Hypoxia up-regulated protein 1 (1002 aa).

An N-terminal signal peptide occupies residues 1 to 23 (MARAPRWMLGWLLLACCVPHTEP). Disordered stretches follow at residues 576–698 (LFGG…PKKQ) and 918–1002 (KPKP…NDEL). Positions 643-675 (PPKEESQKNEEGEKSEARDPKEDKETVNEEELS) are enriched in basic and acidic residues. Over residues 933–947 (GKNATGTSESENTIP) the composition is skewed to polar residues. Composition is skewed to basic and acidic residues over residues 951 to 962 (GKQEEKPEDISP) and 983 to 1002 (SSKKEKKPEAGGESRKNDEL). A Prevents secretion from ER motif is present at residues 999–1002 (NDEL).

It belongs to the heat shock protein 70 family.

Its subcellular location is the endoplasmic reticulum lumen. Its function is as follows. Has a pivotal role in cytoprotective cellular mechanisms triggered by oxygen deprivation. Promotes HSPA5/BiP-mediated ATP nucleotide exchange and thereby activates the unfolded protein response (UPR) pathway in the presence of endoplasmic reticulum stress. May play a role as a molecular chaperone and participate in protein folding. The chain is Hypoxia up-regulated protein 1 (HYOU1) from Gallus gallus (Chicken).